Consider the following 81-residue polypeptide: Small cysteine-rich protein 1 1 (81 aa).

The first 19 residues, 1-19 (MGVHFNICLLLLLVATISS), serve as a signal peptide directing secretion. The propeptide occupies 20-39 (QTLKATEKDDSTDENPFGIY).

This sequence belongs to the Cnidaria small cysteine-rich protein (SCRiP) family. alpha subfamily. In terms of processing, the basic myotoxic domain of rattlesnake crotamine toxins (with 6 Cys residues) has been detected in this protein. However, this protein contains 2 additional Cys at the C-terminal region. Hence, this protein may contain 4 disulfide bonds instead of the 3 suggested by the myotoxin domain.

It localises to the secreted. The protein localises to the nematocyst. Induces neurotoxic symptoms on zebrafish. Has also been claimed to be implied in calcification, but tests on homolog proteins suggest that proteins of this family have a neurotoxic function and not a calcification function. The sequence is that of Small cysteine-rich protein 1 1 from Montipora capitata (Rice coral).